We begin with the raw amino-acid sequence, 240 residues long: REF/SRPP-like protein At1g67360 (240 aa).

Residues 208-240 are disordered; sequence KEDARRKKGGDTAGKKGETTDAADGDKSSSDSE.

It belongs to the REF/SRPP family.

This chain is REF/SRPP-like protein At1g67360, found in Arabidopsis thaliana (Mouse-ear cress).